Here is an 83-residue protein sequence, read N- to C-terminus: Exodeoxyribonuclease 7 small subunit (83 aa).

Belongs to the XseB family. As to quaternary structure, heterooligomer composed of large and small subunits.

The protein resides in the cytoplasm. It catalyses the reaction Exonucleolytic cleavage in either 5'- to 3'- or 3'- to 5'-direction to yield nucleoside 5'-phosphates.. Functionally, bidirectionally degrades single-stranded DNA into large acid-insoluble oligonucleotides, which are then degraded further into small acid-soluble oligonucleotides. This is Exodeoxyribonuclease 7 small subunit from Aeromonas salmonicida (strain A449).